A 187-amino-acid chain; its full sequence is Threonylcarbamoyl-AMP synthase (187 aa).

The 184-residue stretch at 4 to 187 (NHTDDPFLLD…GHSGQTIRDN (184 aa)) folds into the YrdC-like domain. Residues 168 to 187 (GSRSPSKIRHGHSGQTIRDN) form a disordered region.

Belongs to the SUA5 family. TsaC subfamily.

The protein localises to the cytoplasm. It carries out the reaction L-threonine + hydrogencarbonate + ATP = L-threonylcarbamoyladenylate + diphosphate + H2O. In terms of biological role, required for the formation of a threonylcarbamoyl group on adenosine at position 37 (t(6)A37) in tRNAs that read codons beginning with adenine. Catalyzes the conversion of L-threonine, HCO(3)(-)/CO(2) and ATP to give threonylcarbamoyl-AMP (TC-AMP) as the acyladenylate intermediate, with the release of diphosphate. The chain is Threonylcarbamoyl-AMP synthase from Pseudoalteromonas atlantica (strain T6c / ATCC BAA-1087).